Here is a 604-residue protein sequence, read N- to C-terminus: NADH-ubiquinone oxidoreductase chain 5 (604 aa).

Transmembrane regions (helical) follow at residues 2 to 22, 41 to 61, 85 to 105, 115 to 135, 138 to 158, 169 to 189, 209 to 231, 239 to 259, 271 to 291, 299 to 318, 323 to 345, 364 to 384, 411 to 431, 455 to 475, 486 to 506, and 582 to 602; these read FSSLMLVSLLVLTLPIMLSIF, AFITSLIPTMMFIHSGQETII, MIFVPVALFVTWSIMEFSLWY, FFKYLLTFLITMMILVTANNL, LFIGWEGVGIMSFLLIGWWYG, AILYNRIGDIGFIMAMAWFLF, LPLLGLLLAATGKSAQFGLHPWL, TPVSALLHSSTMVVAGVFLLI, IQSLTLCLGAITTLFTAICAL, IIAFSTSSQLGLMIVTIGIN, AFLHICTHAFFKAMLFMCSGSII, MPFTTTSLIIGSLALTGIPFL, LIATSLTAVYSTRIIFFALLG, LLIGSIFAGFFISNNIYPTTV, LTALAVTILGFTLALELSLMT, and IKLYFLSFLITLTLSMLLFNL.

This sequence belongs to the complex I subunit 5 family. Core subunit of respiratory chain NADH dehydrogenase (Complex I) which is composed of 45 different subunits.

The protein resides in the mitochondrion inner membrane. The catalysed reaction is a ubiquinone + NADH + 5 H(+)(in) = a ubiquinol + NAD(+) + 4 H(+)(out). Core subunit of the mitochondrial membrane respiratory chain NADH dehydrogenase (Complex I) which catalyzes electron transfer from NADH through the respiratory chain, using ubiquinone as an electron acceptor. Essential for the catalytic activity and assembly of complex I. This chain is NADH-ubiquinone oxidoreductase chain 5 (MT-ND5), found in Equus caballus (Horse).